Reading from the N-terminus, the 215-residue chain is Cytochrome c biogenesis ATP-binding export protein CcmA (215 aa).

An ABC transporter domain is found at Leu7–Tyr209. Gly39 to Thr46 contributes to the ATP binding site.

This sequence belongs to the ABC transporter superfamily. CcmA exporter (TC 3.A.1.107) family. The complex is composed of two ATP-binding proteins (CcmA) and two transmembrane proteins (CcmB).

The protein resides in the cell inner membrane. It catalyses the reaction heme b(in) + ATP + H2O = heme b(out) + ADP + phosphate + H(+). Its function is as follows. Part of the ABC transporter complex CcmAB involved in the biogenesis of c-type cytochromes; once thought to export heme, this seems not to be the case, but its exact role is uncertain. Responsible for energy coupling to the transport system. The protein is Cytochrome c biogenesis ATP-binding export protein CcmA of Mannheimia succiniciproducens (strain KCTC 0769BP / MBEL55E).